The primary structure comprises 248 residues: MSNQATSEIKFVIVIATYYRKDGLTLKYLTRCLESVKKQTYTNWVVYLIGDEYENTDEFNKFATLIDTNKIIIHNKPDPERKHILDKSRLWNIAGASAMNYGLNLARSNGEKYYVHLDDDDFWESKHLENLYQAYQNYSNCIFAYTKSTYPYAHVVPNKILPREDIKSIFPNNLLPRNSNLIHSSVSFRCDIIPFDYHTTHNVSEIKGPSDAIMWDTIRQFILSNPAYCCIFIPEVTCRHDEEGSIKN.

The protein belongs to the glycosyltransferase 2 family.

This is an uncharacterized protein from Acanthamoeba polyphaga (Amoeba).